A 224-amino-acid polypeptide reads, in one-letter code: Putative MgpC-like protein MPN_150 (224 aa).

Belongs to the MgpC family.

The sequence is that of Putative MgpC-like protein MPN_150 from Mycoplasma pneumoniae (strain ATCC 29342 / M129 / Subtype 1) (Mycoplasmoides pneumoniae).